Reading from the N-terminus, the 1231-residue chain is Cohesin subunit SA-2 (1231 aa).

Methionine 1 carries the post-translational modification N-acetylmethionine. The interval 1–75 (MIAAPEIPTD…GPNRMNGHHQ (75 aa)) is disordered. The span at 36–48 (KQGKGKTCKKGKK) shows a compositional bias: basic residues. The 86-residue stretch at 293–378 (FVHRYRDAIA…SRFKDRIVSM (86 aa)) folds into the SCD domain. Position 607 is an N6-acetyllysine (lysine 607). 4 positions are modified to phosphoserine: serine 1058, serine 1061, serine 1064, and serine 1065. The segment at 1064 to 1083 (SSRGSTVRSKKSKPSTGKRK) is disordered. Residues 1071–1082 (RSKKSKPSTGKR) show a composition bias toward basic residues. At threonine 1112 the chain carries Phosphothreonine. 2 positions are modified to phosphoserine: serine 1177 and serine 1178.

It belongs to the SCC3 family. Interacts directly with RAD21 in cohesin complex. Cohesin complexes are composed of a heterodimer between a SMC1 protein (SMC1A or SMC1B) and SMC3, which are attached via their hinge domain, and RAD21 which link them at their heads, and one STAG protein (STAG1, STAG2 or STAG3). In cohesin complexes, STAG2 is mutually exclusive with STAG1 and STAG3. Post-translationally, phosphorylated by PLK1. The large dissociation of cohesin from chromosome arms during prophase is partly due to its phosphorylation.

The protein resides in the nucleus. Its subcellular location is the chromosome. It is found in the centromere. In terms of biological role, component of cohesin complex, a complex required for the cohesion of sister chromatids after DNA replication. The cohesin complex apparently forms a large proteinaceous ring within which sister chromatids can be trapped. At anaphase, the complex is cleaved and dissociates from chromatin, allowing sister chromatids to segregate. The cohesin complex may also play a role in spindle pole assembly during mitosis. The sequence is that of Cohesin subunit SA-2 (STAG2) from Homo sapiens (Human).